The sequence spans 221 residues: Tumor protein p53-inducible nuclear protein 2 (221 aa).

The short motif at 26 to 41 (VSEEDEVDGWLIIDLQ) is the LIR element. Positions 41–68 (QDSYTAPPDPGASPAPAGRPPPAPSLMD) are disordered. A compositionally biased stretch (pro residues) spans 47-64 (PPDPGASPAPAGRPPPAP). S136 carries the post-translational modification Phosphoserine. The disordered stretch occupies residues 177–210 (RQRAERHTLSAKVLQRQNRARESRSRRPKHQGSF).

In terms of assembly, interacts with VMP1, GABARAP, GABARAPL1, GABARAPL2, MAP1LC3A, MAP1LC3B, MAP1LC3C and THRA.

The protein localises to the cytoplasm. The protein resides in the cytosol. It localises to the nucleus. Its subcellular location is the PML body. It is found in the cytoplasmic vesicle. The protein localises to the autophagosome. Dual regulator of transcription and autophagy. Positively regulates autophagy and is required for autophagosome formation and processing. May act as a scaffold protein that recruits MAP1LC3A, GABARAP and GABARAPL2 and brings them to the autophagosome membrane by interacting with VMP1 where, in cooperation with the BECN1-PI3-kinase class III complex, they trigger autophagosome development. Acts as a transcriptional activator of THRA. The sequence is that of Tumor protein p53-inducible nuclear protein 2 (Tp53inp2) from Mus musculus (Mouse).